A 209-amino-acid polypeptide reads, in one-letter code: Large ribosomal subunit protein uL4 (209 aa).

Residues 46–71 (GTSSTKTRSEVRGSSKKPWKQKGTGR) form a disordered region. Basic residues predominate over residues 59–71 (SSKKPWKQKGTGR).

The protein belongs to the universal ribosomal protein uL4 family. As to quaternary structure, part of the 50S ribosomal subunit.

Functionally, one of the primary rRNA binding proteins, this protein initially binds near the 5'-end of the 23S rRNA. It is important during the early stages of 50S assembly. It makes multiple contacts with different domains of the 23S rRNA in the assembled 50S subunit and ribosome. Forms part of the polypeptide exit tunnel. This chain is Large ribosomal subunit protein uL4, found in Borrelia garinii subsp. bavariensis (strain ATCC BAA-2496 / DSM 23469 / PBi) (Borreliella bavariensis).